The following is a 519-amino-acid chain: 2-isopropylmalate synthase (519 aa).

Positions valine 5–serine 267 constitute a Pyruvate carboxyltransferase domain. Positions 14, 202, 204, and 238 each coordinate Mn(2+). The segment at arginine 392–valine 519 is regulatory domain.

The protein belongs to the alpha-IPM synthase/homocitrate synthase family. LeuA type 1 subfamily. Homodimer. It depends on Mn(2+) as a cofactor.

It localises to the cytoplasm. It carries out the reaction 3-methyl-2-oxobutanoate + acetyl-CoA + H2O = (2S)-2-isopropylmalate + CoA + H(+). It functions in the pathway amino-acid biosynthesis; L-leucine biosynthesis; L-leucine from 3-methyl-2-oxobutanoate: step 1/4. Catalyzes the condensation of the acetyl group of acetyl-CoA with 3-methyl-2-oxobutanoate (2-ketoisovalerate) to form 3-carboxy-3-hydroxy-4-methylpentanoate (2-isopropylmalate). The protein is 2-isopropylmalate synthase of Psychromonas ingrahamii (strain DSM 17664 / CCUG 51855 / 37).